We begin with the raw amino-acid sequence, 259 residues long: UBX domain-containing protein 2A (259 aa).

A required for interaction with CHRNA3 region spans residues 1 to 151 (MKDVDNLKSI…SATPKIVSKA (151 aa)). The tract at residues 1-164 (MKDVDNLKSI…EVENKNNLSA (164 aa)) is required for inhibition of CHRNA3 ubiquitination and translocation of CHRNA3 to the plasma membrane resulting in an increase in acetylcholine-gated nicotinic acetylcholine receptor currents. The SEP domain occupies 60-124 (QVDVNIKLWK…VEDKKNEICL (65 aa)). The required for interaction with VCP stretch occupies residues 167 to 259 (LNNLEPITNI…TASFRELSEH (93 aa)). Residues 169 to 246 (NLEPITNIQI…DLQNAVIIQR (78 aa)) enclose the UBX domain.

As to quaternary structure, part of a complex composed of STUB1/CHIP, VCP/p97, CHRNA3, and UBXN2A that modulates the ubiquitination and endoplasmic reticulum-associated degradation (ERAD) of CHRNA3. Within the complex UBXN2A acts as a scaffold protein required for the interaction of CHRNA3 with VCP/p97, this interaction also inhibits CHRNA3 ubiquitination by STUB1/CHIP and subsequently ERAD. Interacts (via SEP domain) with CHRNA3 and interacts (via UBX domain) with VCP/P97; these interactions are required for the interaction of CHRNA3 with the STUB1-VCP-UBXN2A complex. Interacts with HSPA9/MOT-2 (via SBD domain); the interaction inhibits HSPA9/MOT-2 interaction with and degradation of p53, thereby promotes p53 translocation to the nucleus. Interacts with RICTOR. Ubiquitinated. As to expression, expressed in the colon (at protein level).

It localises to the golgi apparatus. The protein resides in the endoplasmic reticulum. The protein localises to the perikaryon. Its subcellular location is the cell projection. It is found in the dendrite. It localises to the nucleus. The protein resides in the cytoplasm. Functionally, acts to repress the ubiquitination and subsequent endoplasmic reticulum-associated degradation of CHRNA3 by the STUB1-VCP-UBXN2A complex in cortical neurons. Also acts to promote the translocation of CHRNA3 to the plasma membrane and subsequently increases plasma membrane acetylcholine-gated ion-channel activation. Plays a role in the inhibition of STUB1-mediated TP53 degradation, via its interaction with HSPA9 which acts to inhibit TP53 binding to HSPA9. Positively mediates the ubiquitination and proteosomal degradation of RICTOR, may thereby act as a negative regulator of the mTORC2 pathway. This is UBX domain-containing protein 2A from Homo sapiens (Human).